The chain runs to 94 residues: Small ribosomal subunit protein bS18 (94 aa).

Belongs to the bacterial ribosomal protein bS18 family. In terms of assembly, part of the 30S ribosomal subunit. Forms a tight heterodimer with protein bS6.

Functionally, binds as a heterodimer with protein bS6 to the central domain of the 16S rRNA, where it helps stabilize the platform of the 30S subunit. In Albidiferax ferrireducens (strain ATCC BAA-621 / DSM 15236 / T118) (Rhodoferax ferrireducens), this protein is Small ribosomal subunit protein bS18.